The following is a 187-amino-acid chain: Adenylate kinase (187 aa).

11 to 16 (GAGKGT) is a binding site for ATP. Positions 31 to 60 (STGDILREAVKNQTAMGIEAKRYMDAGDLV) are NMP. AMP-binding positions include threonine 32, arginine 37, 58 to 60 (DLV), 86 to 89 (GFPR), and glutamine 93. The LID stretch occupies residues 127-137 (GRAEIEGRADD). Arginine 128 contacts ATP. Positions 134 and 145 each coordinate AMP. Glycine 173 contacts ATP.

It belongs to the adenylate kinase family. Monomer.

Its subcellular location is the cytoplasm. The catalysed reaction is AMP + ATP = 2 ADP. It participates in purine metabolism; AMP biosynthesis via salvage pathway; AMP from ADP: step 1/1. Catalyzes the reversible transfer of the terminal phosphate group between ATP and AMP. Plays an important role in cellular energy homeostasis and in adenine nucleotide metabolism. This chain is Adenylate kinase, found in Leptospira interrogans serogroup Icterohaemorrhagiae serovar copenhageni (strain Fiocruz L1-130).